A 597-amino-acid chain; its full sequence is Arginine--tRNA ligase (597 aa).

Residues 23 to 32 show a composition bias toward low complexity; it reads QAAAARQASQ. Positions 23–43 are disordered; that stretch reads QAAAARQASQPLDPQLAPASK. The short motif at 137 to 147 is the 'HIGH' region element; sequence PNIAKEMHVGH.

This sequence belongs to the class-I aminoacyl-tRNA synthetase family. Monomer.

The protein resides in the cytoplasm. It carries out the reaction tRNA(Arg) + L-arginine + ATP = L-arginyl-tRNA(Arg) + AMP + diphosphate. In Synechococcus sp. (strain WH7803), this protein is Arginine--tRNA ligase.